The primary structure comprises 132 residues: Small ribosomal subunit protein uS8 (132 aa).

Belongs to the universal ribosomal protein uS8 family. Part of the 30S ribosomal subunit. Contacts proteins S5 and S12.

In terms of biological role, one of the primary rRNA binding proteins, it binds directly to 16S rRNA central domain where it helps coordinate assembly of the platform of the 30S subunit. In Xylella fastidiosa (strain M23), this protein is Small ribosomal subunit protein uS8.